We begin with the raw amino-acid sequence, 206 residues long: MEFSSKLIEKAVNEMSQLPGIGKRTALRLVLHLLKQPKEQTGFLSQALLNMREDIKFCENCHNISDTKVCEICANSVRNHQTICVVEDIRDVMAIENTGQYKGIYHVLGGKISPIEGVGPSQLNISSLVEKVKSGKVVEIIFALSSTMEGDTTNFYIYKQIAESEIIISTIARGISVGDELEYADEITLGRSILHRVPFEKTFKNN.

A C4-type zinc finger spans residues Cys-58 to Cys-73. The Toprim domain occupies Gln-81 to Ser-176.

The protein belongs to the RecR family.

Its function is as follows. May play a role in DNA repair. It seems to be involved in an RecBC-independent recombinational process of DNA repair. It may act with RecF and RecO. This Flavobacterium johnsoniae (strain ATCC 17061 / DSM 2064 / JCM 8514 / BCRC 14874 / CCUG 350202 / NBRC 14942 / NCIMB 11054 / UW101) (Cytophaga johnsonae) protein is Recombination protein RecR.